Here is a 382-residue protein sequence, read N- to C-terminus: Lycopene beta-cyclase (382 aa).

Residue 6–36 (DLILVGAGLANGLIALRLQQQQPDMRILLID) coordinates NAD(+).

The protein belongs to the lycopene cyclase family. The cofactor is FAD.

The protein localises to the cell inner membrane. It catalyses the reaction a carotenoid psi-end group = a carotenoid beta-end derivative. The catalysed reaction is all-trans-lycopene = gamma-carotene. It carries out the reaction gamma-carotene = all-trans-beta-carotene. The enzyme catalyses all-trans-neurosporene = beta-zeacarotene. It catalyses the reaction beta-zeacarotene = 7,8-dihydro-beta-carotene. It participates in carotenoid biosynthesis; beta-carotene biosynthesis. Its activity is regulated as follows. Activity is increased in the presence of NAD(P)H. NADPH is not involved directly in the cyclization reaction, but must play an indirect role, e.g. as an allosteric activator. Its function is as follows. Catalyzes the double cyclization reaction which converts lycopene to beta-carotene. Also catalyzes the double cyclization reaction which converts neurosporene to 7,8-dihydro-beta-carotene via monocyclic beta-zeacarotene. May also convert zeta-carotene to bicyclic 7,8,7',8'-tetrahydro-beta-carotene. The sequence is that of Lycopene beta-cyclase from Pantoea ananas (Erwinia uredovora).